A 330-amino-acid chain; its full sequence is Beta-ketoacyl-[acyl-carrier-protein] synthase III (330 aa).

Active-site residues include C115 and H255. Positions Q256 to R260 are ACP-binding. N285 is an active-site residue.

It belongs to the thiolase-like superfamily. FabH family. As to quaternary structure, homodimer.

The protein localises to the cytoplasm. The enzyme catalyses malonyl-[ACP] + acetyl-CoA + H(+) = 3-oxobutanoyl-[ACP] + CO2 + CoA. Its pathway is lipid metabolism; fatty acid biosynthesis. Functionally, catalyzes the condensation reaction of fatty acid synthesis by the addition to an acyl acceptor of two carbons from malonyl-ACP. Catalyzes the first condensation reaction which initiates fatty acid synthesis and may therefore play a role in governing the total rate of fatty acid production. Possesses both acetoacetyl-ACP synthase and acetyl transacylase activities. Its substrate specificity determines the biosynthesis of branched-chain and/or straight-chain of fatty acids. This is Beta-ketoacyl-[acyl-carrier-protein] synthase III from Helicobacter pylori (strain HPAG1).